Reading from the N-terminus, the 400-residue chain is uncharacterized protein (400 aa).

It to M.jannaschii MJ1544 and MJ1637.

This is an uncharacterized protein from Haemophilus influenzae (strain ATCC 51907 / DSM 11121 / KW20 / Rd).